We begin with the raw amino-acid sequence, 492 residues long: Serine/threonine protein phosphatase 2A 57 kDa regulatory subunit B' theta isoform (492 aa).

A disordered region spans residues 1–63 (MWKQILSKLP…GFKEGNLKGN (63 aa)). Residues 16-39 (KNHSSSSSSTSKSSDNGASKSGNS) are compositionally biased toward low complexity. A Microbody targeting signal motif is present at residues 490-492 (SSL).

It belongs to the phosphatase 2A regulatory subunit B56 family. As to quaternary structure, PP2A consists of a common heteromeric enzyme, composed of a catalytic subunit (subunits C), a constant regulatory subunit (subunit A), and a variety of regulatory subunits such as subunits B (the R2/B/PR55/B55, R3/B''/PR72/PR130/PR59 and R5/B'/B56 families). Interacts with BZR1. Interacts with PP2A2, PP2A5 and PP2AA2. In terms of tissue distribution, highly expressed in dry seeds. Expressed in roots, cotyledons, rosette leaves and flowers.

It is found in the cytoplasm. Its subcellular location is the cytosol. It localises to the peroxisome. The B regulatory subunit may modulate substrate selectivity and catalytic activity, and may also direct the localization of the catalytic enzyme to a particular subcellular compartment. Associates with the serine/threonine-protein phosphatase PP2A catalytic subunit C and regulatory subunit A to positively regulates beta-oxidation of fatty acids and protoauxins in peroxisomes by dephosphorylating peroxisomal beta-oxidation-related proteins. Required for the formation of the PP2A holoenzyme that negatively regulates brassinosteroid signaling by dephosphorylating and inactivating BRI1 in the cytoplasm. The chain is Serine/threonine protein phosphatase 2A 57 kDa regulatory subunit B' theta isoform (B'THETA) from Arabidopsis thaliana (Mouse-ear cress).